The primary structure comprises 430 residues: MANVVVVGAQWGDEGKGKIVDWLSEQADIVVRFQGGHNAGHTLVINGQTYKLALLPSGVLRPSKLAVIGNGVVFDPQAFLDEVKKLQGQGVAISPENLRIAENVTLILPLHRELDATRENAAKAGAIGTTQRGIGPAYEDKVGRRAIRLMDLADLDTLPTKIERLLAHHNALRRGLGQPEIDAGQILADLSAMAPHLLPYAESVWRLLDIKRREGKRILFEGAQGALLDVDHGTYPYVTSSNTVAAQAATGTGMGPGAVGYVLGICKAYTTRVGAGPFPTELTNEIGEEIGRRGKEFGVNTGRKRRCGWFDAVLVRQTVRTCGIHGLALTKLDILDGFDSVEVCVGYKLDGKEIDYLPAGEGAQARVEPIYETIEGWKEPTANARSWAELPAQAIKYVRRIEELVGCPVALLSTSPEREDTILVQNPFEA.

Residues 12 to 18 and 40 to 42 each bind GTP; these read GDEGKGK and GHT. Asp-13 functions as the Proton acceptor in the catalytic mechanism. Residues Asp-13 and Gly-40 each contribute to the Mg(2+) site. IMP is bound by residues 13–16, 38–41, Thr-130, Arg-144, Gln-224, Thr-239, and Arg-303; these read DEGK and NAGH. The active-site Proton donor is the His-41. A substrate-binding site is contributed by 299–305; sequence VNTGRKR. Residues Arg-305, 331–333, and 413–415 contribute to the GTP site; these read KLD and STS.

Belongs to the adenylosuccinate synthetase family. As to quaternary structure, homodimer. Requires Mg(2+) as cofactor.

Its subcellular location is the cytoplasm. The enzyme catalyses IMP + L-aspartate + GTP = N(6)-(1,2-dicarboxyethyl)-AMP + GDP + phosphate + 2 H(+). The protein operates within purine metabolism; AMP biosynthesis via de novo pathway; AMP from IMP: step 1/2. Plays an important role in the de novo pathway of purine nucleotide biosynthesis. Catalyzes the first committed step in the biosynthesis of AMP from IMP. The polypeptide is Adenylosuccinate synthetase (Rhodopseudomonas palustris (strain TIE-1)).